The following is a 430-amino-acid chain: uncharacterized protein (430 aa).

Its subcellular location is the cytoplasm. It is found in the nucleus. This is an uncharacterized protein from Schizosaccharomyces pombe (strain 972 / ATCC 24843) (Fission yeast).